The sequence spans 202 residues: NADH-quinone oxidoreductase subunit C (202 aa).

The protein belongs to the complex I 30 kDa subunit family. As to quaternary structure, NDH-1 is composed of 14 different subunits. Subunits NuoB, C, D, E, F, and G constitute the peripheral sector of the complex.

The protein resides in the cell inner membrane. The enzyme catalyses a quinone + NADH + 5 H(+)(in) = a quinol + NAD(+) + 4 H(+)(out). Its function is as follows. NDH-1 shuttles electrons from NADH, via FMN and iron-sulfur (Fe-S) centers, to quinones in the respiratory chain. The immediate electron acceptor for the enzyme in this species is believed to be ubiquinone. Couples the redox reaction to proton translocation (for every two electrons transferred, four hydrogen ions are translocated across the cytoplasmic membrane), and thus conserves the redox energy in a proton gradient. This Acidithiobacillus ferrooxidans (strain ATCC 23270 / DSM 14882 / CIP 104768 / NCIMB 8455) (Ferrobacillus ferrooxidans (strain ATCC 23270)) protein is NADH-quinone oxidoreductase subunit C.